Reading from the N-terminus, the 470-residue chain is Ras-like GTPase HI_1637 (470 aa).

The Walker A motif signature appears at Gly27–Thr34. Ser29, Gly32, Lys33, Thr34, Ala35, Trp98, Ser101, Thr102, Arg103, Lys342, Asp344, and His345 together coordinate GTP. GDP-binding residues include Gly32, Lys33, Thr34, Ala35, Trp98, Ser101, and Thr102. Positions 342, 344, 345, 383, and 384 each coordinate GDP. Val384 is a GTP binding site.

To E.coli YcjX. Monomer in solution. Mg(2+) is required as a cofactor.

The catalysed reaction is GTP + H2O = GDP + phosphate + H(+). Its activity is regulated as follows. Alternates between an inactive form bound to GDP and an active form bound to GTP. Likely activated by a guanine nucleotide-exchange factor (GEF). Binds GTP and GDP. Has intrinsic GTPase activity. Does not hydrolyze ATP. May act as a transducer of stress responses. This is Ras-like GTPase HI_1637 from Haemophilus influenzae (strain ATCC 51907 / DSM 11121 / KW20 / Rd).